Reading from the N-terminus, the 1054-residue chain is SMC5-SMC6 complex localization factor protein 1 (1054 aa).

2 BRCT domains span residues 2 to 80 (EDSA…AKSG) and 121 to 199 (PGAF…LLEK). Residues 283–303 (RHGLENQKETKKKDKNIQRSY) form a disordered region. The segment covering 284–299 (HGLENQKETKKKDKNI) has biased composition (basic and acidic residues). An NSE5-like domain; mediates interaction with SLF2 region spans residues 407-1054 (PRGILNLIEN…MMCQSITELS (648 aa)). ANK repeat units follow at residues 802–832 (KGET…DINV), 836–865 (AGWT…EVDL), and 870–900 (DGVT…ELLQ).

In terms of assembly, interacts (via BRCT domains) with RAD18 (via C-terminus and phosphorylated form); this interaction is required for efficient repair of UV-induced DNA damage. Interacts (via N-terminus) with SLF2; this interaction links RAD18 to the SMC5-SMC6 complex. Interacts (via BRCT domains) with RAD18; this interaction occurs in a SLF2-independent manner. Interacts with SMC6. In terms of tissue distribution, widely expressed. Expressed in testis. Expressed in spermatocytes.

It is found in the nucleus. Its subcellular location is the cytoplasm. The protein resides in the cytoskeleton. It localises to the microtubule organizing center. The protein localises to the centrosome. Plays a role in the DNA damage response (DDR) pathway by regulating postreplication repair of UV-damaged DNA and genomic stability maintenance. The SLF1-SLF2 complex acts to link RAD18 with the SMC5-SMC6 complex at replication-coupled interstrand cross-links (ICL) and DNA double-strand breaks (DSBs) sites on chromatin during DNA repair in response to stalled replication forks. Promotes the recruitment of SLF2 and the SMC5-SMC6 complex to DNA lesions. The polypeptide is SMC5-SMC6 complex localization factor protein 1 (Mus musculus (Mouse)).